A 488-amino-acid chain; its full sequence is 3-octaprenyl-4-hydroxybenzoate carboxy-lyase (488 aa).

N172 contacts Mn(2+). Residues 175–177, 189–191, and 194–195 each bind prenylated FMN; these read IYR, RWL, and RG. Position 238 (E238) interacts with Mn(2+). D287 acts as the Proton donor in catalysis.

This sequence belongs to the UbiD family. As to quaternary structure, homohexamer. Prenylated FMN is required as a cofactor. It depends on Mn(2+) as a cofactor.

It is found in the cell membrane. The enzyme catalyses a 4-hydroxy-3-(all-trans-polyprenyl)benzoate + H(+) = a 2-(all-trans-polyprenyl)phenol + CO2. It participates in cofactor biosynthesis; ubiquinone biosynthesis. In terms of biological role, catalyzes the decarboxylation of 3-octaprenyl-4-hydroxy benzoate to 2-octaprenylphenol, an intermediate step in ubiquinone biosynthesis. In Legionella pneumophila subsp. pneumophila (strain Philadelphia 1 / ATCC 33152 / DSM 7513), this protein is 3-octaprenyl-4-hydroxybenzoate carboxy-lyase.